A 311-amino-acid chain; its full sequence is Aspartate carbamoyltransferase catalytic subunit (311 aa).

The carbamoyl phosphate site is built by Arg58 and Thr59. Residue Lys86 participates in L-aspartate binding. Carbamoyl phosphate-binding residues include Arg108, His136, and Gln139. L-aspartate-binding residues include Arg169 and Arg223. Positions 264 and 265 each coordinate carbamoyl phosphate.

It belongs to the aspartate/ornithine carbamoyltransferase superfamily. ATCase family. As to quaternary structure, heterododecamer (2C3:3R2) of six catalytic PyrB chains organized as two trimers (C3), and six regulatory PyrI chains organized as three dimers (R2).

It catalyses the reaction carbamoyl phosphate + L-aspartate = N-carbamoyl-L-aspartate + phosphate + H(+). Its pathway is pyrimidine metabolism; UMP biosynthesis via de novo pathway; (S)-dihydroorotate from bicarbonate: step 2/3. Catalyzes the condensation of carbamoyl phosphate and aspartate to form carbamoyl aspartate and inorganic phosphate, the committed step in the de novo pyrimidine nucleotide biosynthesis pathway. This Pelodictyon phaeoclathratiforme (strain DSM 5477 / BU-1) protein is Aspartate carbamoyltransferase catalytic subunit.